We begin with the raw amino-acid sequence, 281 residues long: Radiation response metalloprotease IrrE (281 aa).

Zn(2+) is bound at residue histidine 82. Glutamate 83 is an active-site residue. Zn(2+) contacts are provided by histidine 86 and glutamate 113. Residues 262 to 281 (LPAGRSEPDADKPEAPGDQS) are disordered. Residues 267 to 281 (SEPDADKPEAPGDQS) are compositionally biased toward basic and acidic residues.

As to quaternary structure, interacts with DdrOC.

Its activity is regulated as follows. Protease activity is inhibited by EDTA. Functionally, plays a central regulatory role in DNA repair and protection pathways in response to radiation stress. Acts as a site-specific metalloprotease that cleaves and inactivates the repressor proteins DdrOC and DdrOP3, resulting in induced expression of genes required for DNA repair and cell survival after exposure to radiation. The chain is Radiation response metalloprotease IrrE from Deinococcus deserti (strain DSM 17065 / CIP 109153 / LMG 22923 / VCD115).